Reading from the N-terminus, the 162-residue chain is uncharacterized protein (162 aa).

Residues 6–24 traverse the membrane as a helical segment; it reads SYLISIFYIILITSETTAF.

Its subcellular location is the membrane. This is an uncharacterized protein from Caenorhabditis elegans.